The primary structure comprises 488 residues: ATP synthase subunit beta, chloroplastic (488 aa).

Residue 170–177 (GGAGVGKT) coordinates ATP.

This sequence belongs to the ATPase alpha/beta chains family. F-type ATPases have 2 components, CF(1) - the catalytic core - and CF(0) - the membrane proton channel. CF(1) has five subunits: alpha(3), beta(3), gamma(1), delta(1), epsilon(1). CF(0) has four main subunits: a(1), b(1), b'(1) and c(9-12).

The protein localises to the plastid. Its subcellular location is the chloroplast thylakoid membrane. It carries out the reaction ATP + H2O + 4 H(+)(in) = ADP + phosphate + 5 H(+)(out). Functionally, produces ATP from ADP in the presence of a proton gradient across the membrane. The catalytic sites are hosted primarily by the beta subunits. The sequence is that of ATP synthase subunit beta, chloroplastic from Picea abies (Norway spruce).